The primary structure comprises 590 residues: L-fucose isomerase (590 aa).

Active-site proton acceptor residues include Glu-337 and Asp-361. 3 residues coordinate Mn(2+): Glu-337, Asp-361, and His-528.

The protein belongs to the L-fucose isomerase family. The cofactor is Mn(2+).

Its subcellular location is the cytoplasm. The catalysed reaction is L-fucose = L-fuculose. It functions in the pathway carbohydrate degradation; L-fucose degradation; L-lactaldehyde and glycerone phosphate from L-fucose: step 1/3. In terms of biological role, converts the aldose L-fucose into the corresponding ketose L-fuculose. The polypeptide is L-fucose isomerase (Bacteroides fragilis (strain ATCC 25285 / DSM 2151 / CCUG 4856 / JCM 11019 / LMG 10263 / NCTC 9343 / Onslow / VPI 2553 / EN-2)).